The sequence spans 549 residues: Eukaryotic translation initiation factor 3 subunit D-2 (549 aa).

The segment at 107–157 (ARVKGRSGRGPGMLGVAGSMAGGGTTSGSTKYGKGRESRRNQGRRFARNAP) is disordered. Over residues 114-132 (GRGPGMLGVAGSMAGGGTT) the composition is skewed to gly residues. The tract at residues 288 to 302 (QFDLLTVNETSLEPP) is RNA gate. The interval 527–549 (NSFDSDAEDEENSSEPFANSLDN) is disordered. A compositionally biased stretch (acidic residues) spans 529-539 (FDSDAEDEENS).

The protein belongs to the eIF-3 subunit D family. In terms of assembly, component of the eukaryotic translation initiation factor 3 (eIF-3) complex. The eIF-3 complex interacts with pix.

It is found in the cytoplasm. In terms of biological role, mRNA cap-binding component of the eukaryotic translation initiation factor 3 (eIF-3) complex, which is involved in protein synthesis of a specialized repertoire of mRNAs and, together with other initiation factors, stimulates binding of mRNA and methionyl-tRNAi to the 40S ribosome. The eIF-3 complex specifically targets and initiates translation of a subset of mRNAs involved in cell proliferation. In the eIF-3 complex, eif3d specifically recognizes and binds the 7-methylguanosine cap of a subset of mRNAs. This chain is Eukaryotic translation initiation factor 3 subunit D-2, found in Drosophila ananassae (Fruit fly).